The chain runs to 338 residues: Methionine import ATP-binding protein MetN 2 (338 aa).

The region spanning 2–242 (IEIEKVCVDF…PQHAFTQQLV (241 aa)) is the ABC transporter domain. 39 to 46 (GTSGAGKS) lines the ATP pocket.

Belongs to the ABC transporter superfamily. Methionine importer (TC 3.A.1.24) family. As to quaternary structure, the complex is composed of two ATP-binding proteins (MetN), two transmembrane proteins (MetI) and a solute-binding protein (MetQ).

The protein resides in the cell inner membrane. The catalysed reaction is L-methionine(out) + ATP + H2O = L-methionine(in) + ADP + phosphate + H(+). The enzyme catalyses D-methionine(out) + ATP + H2O = D-methionine(in) + ADP + phosphate + H(+). In terms of biological role, part of the ABC transporter complex MetNIQ involved in methionine import. Responsible for energy coupling to the transport system. This chain is Methionine import ATP-binding protein MetN 2, found in Salmonella typhimurium (strain LT2 / SGSC1412 / ATCC 700720).